Consider the following 258-residue polypeptide: Sugar fermentation stimulation protein homolog (258 aa).

It belongs to the SfsA family.

In Prochlorococcus marinus (strain NATL2A), this protein is Sugar fermentation stimulation protein homolog.